A 445-amino-acid chain; its full sequence is Proline--tRNA ligase (445 aa).

This sequence belongs to the class-II aminoacyl-tRNA synthetase family. ProS type 2 subfamily. Homodimer.

The protein localises to the cytoplasm. It catalyses the reaction tRNA(Pro) + L-proline + ATP = L-prolyl-tRNA(Pro) + AMP + diphosphate. Its function is as follows. Catalyzes the attachment of proline to tRNA(Pro) in a two-step reaction: proline is first activated by ATP to form Pro-AMP and then transferred to the acceptor end of tRNA(Pro). The chain is Proline--tRNA ligase from Caulobacter sp. (strain K31).